The following is a 132-amino-acid chain: MAFDGTWKVDRNENYEKFMEKMGINVVKRKLGAHDNLKLTITQEGNKFTVKESSNFRNIDVVFELGVDFAYSLADGTELTGTWTMEGNKLVGKFKRVDNGKELIAVREISGNELIQTYTYEGVEAKRIFKKE.

N-acetylalanine is present on alanine 2. Residues tryptophan 83 and arginine 107 each contribute to the hexadecanoate site. The tetradecanoate site is built by tryptophan 83 and arginine 107.

Belongs to the calycin superfamily. Fatty-acid binding protein (FABP) family. Expressed in the small intestine. Expression in the mucosal cells of the ileum extends from the midvillar region to the villus tips.

It is found in the cytoplasm. Functionally, FABPs are thought to play a role in the intracellular transport of long-chain fatty acids and their acyl-CoA esters. FABP2 is probably involved in triglyceride-rich lipoprotein synthesis. Binds saturated long-chain fatty acids with a high affinity, but binds with a lower affinity to unsaturated long-chain fatty acids. FABP2 may also help maintain energy homeostasis by functioning as a lipid sensor. The protein is Fatty acid-binding protein, intestinal (Fabp2) of Rattus norvegicus (Rat).